The primary structure comprises 413 residues: L-methionine gamma-lyase (413 aa).

Residues Tyr75 to Arg77 and Gly105 to Met106 each bind pyridoxal 5'-phosphate. Residue Tyr131 participates in substrate binding. Residue Ser218–Thr220 coordinates pyridoxal 5'-phosphate. Lys221 carries the N6-(pyridoxal phosphate)lysine modification. Position 365 (Arg365) interacts with substrate. The segment at Arg388–Arg413 is disordered.

This sequence belongs to the trans-sulfuration enzymes family. In terms of assembly, homotetramer; dimer of active dimers. The cofactor is pyridoxal 5'-phosphate.

It carries out the reaction L-methionine + H2O = methanethiol + 2-oxobutanoate + NH4(+). It catalyses the reaction L-homocysteine + H2O = 2-oxobutanoate + hydrogen sulfide + NH4(+) + H(+). The catalysed reaction is L-cysteine + H2O = hydrogen sulfide + pyruvate + NH4(+) + H(+). Functionally, catalyzes the alpha,gamma-elimination of L-methionine to produce methanethiol, 2-oxobutanoate and ammonia. Is probably involved in L-methionine catabolism. Is also able to catalyze the alpha,gamma-elimination of L-homocysteine, and, to a lesser extent, the alpha,beta-elimination of L-cysteine. In Streptomyces avermitilis (strain ATCC 31267 / DSM 46492 / JCM 5070 / NBRC 14893 / NCIMB 12804 / NRRL 8165 / MA-4680), this protein is L-methionine gamma-lyase.